Reading from the N-terminus, the 490-residue chain is Cis-aconitate decarboxylase (490 aa).

Belongs to the PrpD family. As to quaternary structure, homodimer.

The protein resides in the mitochondrion. The catalysed reaction is cis-aconitate + H(+) = itaconate + CO2. Involved in the production of itaconic acid, a soluble unsaturated dicarboxylic acid mainly produced from sugars. The sequence is that of Cis-aconitate decarboxylase (cad1) from Aspergillus terreus (strain NIH 2624 / FGSC A1156).